Reading from the N-terminus, the 181-residue chain is ATP synthase subunit delta (181 aa).

It belongs to the ATPase delta chain family. As to quaternary structure, F-type ATPases have 2 components, F(1) - the catalytic core - and F(0) - the membrane proton channel. F(1) has five subunits: alpha(3), beta(3), gamma(1), delta(1), epsilon(1). F(0) has three main subunits: a(1), b(2) and c(10-14). The alpha and beta chains form an alternating ring which encloses part of the gamma chain. F(1) is attached to F(0) by a central stalk formed by the gamma and epsilon chains, while a peripheral stalk is formed by the delta and b chains.

The protein localises to the cell membrane. Its function is as follows. F(1)F(0) ATP synthase produces ATP from ADP in the presence of a proton or sodium gradient. F-type ATPases consist of two structural domains, F(1) containing the extramembraneous catalytic core and F(0) containing the membrane proton channel, linked together by a central stalk and a peripheral stalk. During catalysis, ATP synthesis in the catalytic domain of F(1) is coupled via a rotary mechanism of the central stalk subunits to proton translocation. Functionally, this protein is part of the stalk that links CF(0) to CF(1). It either transmits conformational changes from CF(0) to CF(1) or is implicated in proton conduction. The sequence is that of ATP synthase subunit delta from Clostridioides difficile (strain 630) (Peptoclostridium difficile).